The sequence spans 174 residues: Crossover junction endodeoxyribonuclease RuvC (174 aa).

Residues Asp8, Glu67, and Asp139 contribute to the active site. Mg(2+)-binding residues include Asp8, Glu67, and Asp139.

This sequence belongs to the RuvC family. As to quaternary structure, homodimer which binds Holliday junction (HJ) DNA. The HJ becomes 2-fold symmetrical on binding to RuvC with unstacked arms; it has a different conformation from HJ DNA in complex with RuvA. In the full resolvosome a probable DNA-RuvA(4)-RuvB(12)-RuvC(2) complex forms which resolves the HJ. It depends on Mg(2+) as a cofactor.

It localises to the cytoplasm. The catalysed reaction is Endonucleolytic cleavage at a junction such as a reciprocal single-stranded crossover between two homologous DNA duplexes (Holliday junction).. Functionally, the RuvA-RuvB-RuvC complex processes Holliday junction (HJ) DNA during genetic recombination and DNA repair. Endonuclease that resolves HJ intermediates. Cleaves cruciform DNA by making single-stranded nicks across the HJ at symmetrical positions within the homologous arms, yielding a 5'-phosphate and a 3'-hydroxyl group; requires a central core of homology in the junction. The consensus cleavage sequence is 5'-(A/T)TT(C/G)-3'. Cleavage occurs on the 3'-side of the TT dinucleotide at the point of strand exchange. HJ branch migration catalyzed by RuvA-RuvB allows RuvC to scan DNA until it finds its consensus sequence, where it cleaves and resolves the cruciform DNA. This Pseudomonas fluorescens (strain ATCC BAA-477 / NRRL B-23932 / Pf-5) protein is Crossover junction endodeoxyribonuclease RuvC.